The following is a 207-amino-acid chain: Small ribosomal subunit protein uS4 (207 aa).

The S4 RNA-binding domain occupies 97 to 160; it reads SRLDNVVYRM…KKQARIVEAL (64 aa).

The protein belongs to the universal ribosomal protein uS4 family. As to quaternary structure, part of the 30S ribosomal subunit. Contacts protein S5. The interaction surface between S4 and S5 is involved in control of translational fidelity.

Functionally, one of the primary rRNA binding proteins, it binds directly to 16S rRNA where it nucleates assembly of the body of the 30S subunit. Its function is as follows. With S5 and S12 plays an important role in translational accuracy. The sequence is that of Small ribosomal subunit protein uS4 from Burkholderia mallei (strain NCTC 10247).